A 371-amino-acid polypeptide reads, in one-letter code: Neuropeptide S receptor (371 aa).

The segment covering 1–21 has biased composition (polar residues); sequence MPANFTEGSFDSSGTGQTLDS. Residues 1 to 22 are disordered; that stretch reads MPANFTEGSFDSSGTGQTLDSS. At 1–52 the chain is on the extracellular side; the sequence is MPANFTEGSFDSSGTGQTLDSSPVACTETVTFTEVVEGKEWGSFYYSFKTEQ. An N-linked (GlcNAc...) asparagine glycan is attached at Asn4. The chain crosses the membrane as a helical span at residues 53–73; sequence LITLWVLFVFTIVGNSVVLFS. Residues 74 to 82 lie on the Cytoplasmic side of the membrane; sequence TWRRKKKSR. A helical membrane pass occupies residues 83 to 103; that stretch reads MTFFVTQLAITDSFTGLVNIL. Topologically, residues 104 to 123 are extracellular; the sequence is TDINWRFTGDFTAPDLVCRV. Residues Cys121 and Cys197 are joined by a disulfide bond. Residues 124 to 144 form a helical membrane-spanning segment; the sequence is VRYLQVVLLYASTYVLVSLSI. Over 145 to 164 the chain is Cytoplasmic; sequence DRYHAIVYPMKFLQGEKQAR. A helical membrane pass occupies residues 165–185; that stretch reads VLIVIAWSLSFLFSIPTLIIF. Over 186 to 212 the chain is Extracellular; the sequence is GKRTLSNGEVQCWALWPDDSYWTPYMT. The chain crosses the membrane as a helical span at residues 213–233; sequence IVAFLVYFIPLTIISIMYGIV. The Cytoplasmic portion of the chain corresponds to 234 to 275; that stretch reads IRTIWIKSKTYETVISNCSDGKLCSSYNRGLISKAKIKAIKY. A helical transmembrane segment spans residues 276 to 296; that stretch reads SIIIILAFICCWSPYFLFDIL. The Extracellular segment spans residues 297 to 312; that stretch reads DNFNLLPDTQERFYAS. The helical transmembrane segment at 313-333 threads the bilayer; it reads VIIQNLPALNSAINPLIYCVF. Over 334 to 371 the chain is Cytoplasmic; it reads SSSISFPCREQRSQDSRMTFRERTERHEMQILSKPEFI.

It belongs to the G-protein coupled receptor 1 family. Vasopressin/oxytocin receptor subfamily. As to expression, isoform 4 is ubiquitous; it is detected in glandular epithelia of bronchus, stomach, small intestine, colon, uterus, esophagus, spleen, kidney, pancreas, prostate and breast. Isoform 1 is detected in uterus, colon and prostate, and in the smooth muscle cell layer in bronchial and arterial walls (at protein level). Isoform 1 is predominantly expressed in smooth muscle. Isoform 4 is predominantly expressed in epithelial cells. In bronchial biopsies, it is expressed in smooth muscle cells of asthma patients, but not in control patients; whereas in epithelial cells, its expression is consistently stronger in asthma patients.

Its subcellular location is the cell membrane. The protein localises to the cytoplasm. G-protein coupled receptor for neuropeptide S (NPS). Promotes mobilization of intracellular Ca(2+) stores. Inhibits cell growth in response to NPS binding. Involved in pathogenesis of asthma and other IgE-mediated diseases. This chain is Neuropeptide S receptor (NPSR1), found in Homo sapiens (Human).